The sequence spans 447 residues: tRNA-2-methylthio-N(6)-dimethylallyladenosine synthase (447 aa).

In terms of domain architecture, MTTase N-terminal spans 4–120; sequence RSFFIKTYGC…INELLERSRT (117 aa). Cysteine 13, cysteine 49, cysteine 83, cysteine 161, cysteine 165, and cysteine 168 together coordinate [4Fe-4S] cluster. One can recognise a Radical SAM core domain in the interval 147–382; sequence HEGEFRKFVT…QARQDEIGLE (236 aa). The 62-residue stretch at 385–446 folds into the TRAM domain; the sequence is QEYIGTTQEV…QHSLRGSIVE (62 aa).

Belongs to the methylthiotransferase family. MiaB subfamily. In terms of assembly, monomer. [4Fe-4S] cluster serves as cofactor.

It localises to the cytoplasm. The enzyme catalyses N(6)-dimethylallyladenosine(37) in tRNA + (sulfur carrier)-SH + AH2 + 2 S-adenosyl-L-methionine = 2-methylsulfanyl-N(6)-dimethylallyladenosine(37) in tRNA + (sulfur carrier)-H + 5'-deoxyadenosine + L-methionine + A + S-adenosyl-L-homocysteine + 2 H(+). In terms of biological role, catalyzes the methylthiolation of N6-(dimethylallyl)adenosine (i(6)A), leading to the formation of 2-methylthio-N6-(dimethylallyl)adenosine (ms(2)i(6)A) at position 37 in tRNAs that read codons beginning with uridine. In Desulfotalea psychrophila (strain LSv54 / DSM 12343), this protein is tRNA-2-methylthio-N(6)-dimethylallyladenosine synthase.